Here is a 112-residue protein sequence, read N- to C-terminus: Large ribosomal subunit protein bL20c (112 aa).

It belongs to the bacterial ribosomal protein bL20 family.

The protein localises to the plastid. The protein resides in the chloroplast. Binds directly to 23S ribosomal RNA and is necessary for the in vitro assembly process of the 50S ribosomal subunit. It is not involved in the protein synthesizing functions of that subunit. This chain is Large ribosomal subunit protein bL20c (rpl20), found in Chlamydomonas reinhardtii (Chlamydomonas smithii).